Here is a 251-residue protein sequence, read N- to C-terminus: Long-distance movement protein (251 aa).

Residues Ser-25 to Lys-134 form a disordered region. The Nuclear localization signal signature appears at Arg-108–Arg-122. The Nuclear export signal motif lies at Leu-149 to Leu-153.

Homooligomer. Interacts with host FIB2; this interaction, is required for ORF3 protein transiting through host Cajal body and nucleolus, relocalization of fibrillarin to the cytoplasm, and in presence of viral RNA, leads to the formation of stable RNPs.

It localises to the host cytoplasm. Its subcellular location is the host nucleus. It is found in the host nucleolus. Protects and provides long-distance movement to viral RNA. Self associates and binds viral RNA and fibrillarin to form filamentous ribonucleoproteins (RNPs) protected from RNase. ORF3 protein actually fulfills functions that are usually provided by capsid protein, which is absent from umbraviruses' genome. In Clitoria (Hyacinth bean), this protein is Long-distance movement protein (ORF3).